The chain runs to 120 residues: Large ribosomal subunit protein bL17 (120 aa).

Belongs to the bacterial ribosomal protein bL17 family. In terms of assembly, part of the 50S ribosomal subunit. Contacts protein L32.

The polypeptide is Large ribosomal subunit protein bL17 (Mycoplasmopsis pulmonis (strain UAB CTIP) (Mycoplasma pulmonis)).